The sequence spans 256 residues: uncharacterized protein (256 aa).

Belongs to the metallo-beta-lactamase superfamily.

This is an uncharacterized protein from Methanocaldococcus jannaschii (strain ATCC 43067 / DSM 2661 / JAL-1 / JCM 10045 / NBRC 100440) (Methanococcus jannaschii).